Here is a 594-residue protein sequence, read N- to C-terminus: UvrABC system protein C (594 aa).

The GIY-YIG domain occupies histidine 13 to isoleucine 99. The UVR domain maps to aspartate 205–isoleucine 240.

The protein belongs to the UvrC family. In terms of assembly, interacts with UvrB in an incision complex.

It localises to the cytoplasm. Functionally, the UvrABC repair system catalyzes the recognition and processing of DNA lesions. UvrC both incises the 5' and 3' sides of the lesion. The N-terminal half is responsible for the 3' incision and the C-terminal half is responsible for the 5' incision. The chain is UvrABC system protein C from Helicobacter pylori (strain HPAG1).